Here is a 320-residue protein sequence, read N- to C-terminus: Aminoacyl tRNA synthase complex-interacting multifunctional protein 2 (320 aa).

At serine 36 the chain carries Phosphoserine. The interaction with PRKN stretch occupies residues threonine 82–proline 162. The interaction with TP53 stretch occupies residues proline 162–histidine 225. Residues leucine 220–glutamine 317 enclose the GST C-terminal domain.

As to quaternary structure, part of the multisynthetase complex (MSC), a multisubunit complex that groups tRNA ligases for Arg (RARS1), Asp (DARS1), Gln (QARS1), Ile (IARS1), Leu (LARS1), Lys (KARS1), Met (MARS1) the bifunctional ligase for Glu and Pro (EPRS1) and the auxiliary subunits AIMP1/p43, AIMP2/p38 and EEF1E1/p18. Interacts (via N-terminus) with KARS1. Interacts with EPRS1. Forms a linear complex that contains MARS1, EEF1E1, EPRS1 and AIMP2 that is at the core of the multisubunit complex. Binds FUBP1 (via C-terminus). Interacts in both its unphosphorylated and phosphorylated forms with p53/TP53 (via N-terminus) in the nucleus following UV irradiation. Interacts (via N-terminus) with PRKN/parkin (via first RING-type domain). Interacts with TARS3. Post-translationally, phosphorylated on serine residues in response to UV irradiation. Ubiquitinated by PRKN, leading to its degradation by the proteasome.

It localises to the cytoplasm. The protein resides in the cytosol. The protein localises to the nucleus. In terms of biological role, required for assembly and stability of the aminoacyl-tRNA synthase complex. Mediates ubiquitination and degradation of FUBP1, a transcriptional activator of MYC, leading to MYC down-regulation which is required for aveolar type II cell differentiation. Blocks MDM2-mediated ubiquitination and degradation of p53/TP53. Functions as a proapoptotic factor. The protein is Aminoacyl tRNA synthase complex-interacting multifunctional protein 2 (Aimp2) of Mus musculus (Mouse).